The following is an 831-amino-acid chain: Isethionate sulfite-lyase (831 aa).

The PFL domain occupies 32-701; sequence PRVFRLLERF…VVSATPNGRT (670 aa). Residues Arg-189, Gln-193, 468–470, and Arg-679 each bind 2-hydroxyethane-1-sulfonate; that span reads CTE. The active-site Cysteine radical intermediate is Cys-468. Glu-470 functions as the Proton acceptor in the catalytic mechanism. The Glycine radical domain occupies 708 to 831; that stretch reads DGSSASHGAD…LIARTEHDVM (124 aa). Gly-806 bears the Glycine radical mark.

It belongs to the glycyl radical enzyme (GRE) family. As to quaternary structure, homodimer. Requires the activating protein IslB to generate the key active site glycyl radical on Gly-806 that is involved in catalysis.

It carries out the reaction 2-hydroxyethane-1-sulfonate = acetaldehyde + sulfite + H(+). Its pathway is organosulfur degradation; alkanesulfonate degradation. Functionally, involved in an anaerobic respiration pathway that converts the sulfonate isethionate (2-hydroxyethanesulfonate) to ammonia, acetate and sulfide. Catalyzes the radical-mediated C-S bond cleavage of isethionate (2-hydroxyethanesulfonate) to form sulfite and acetaldehyde. The polypeptide is Isethionate sulfite-lyase (Desulfovibrio desulfuricans (strain ATCC 27774 / DSM 6949 / MB)).